We begin with the raw amino-acid sequence, 90 residues long: Major mite allergen Der p 23 (90 aa).

The N-terminal stretch at 1-21 (MKFNIIIVFISLAILVHSSYA) is a signal peptide. A disordered region spans residues 22–42 (ANDNDDDPTTTVHPTTTEQPD). The span at 30 to 39 (TTTVHPTTTE) shows a compositional bias: low complexity. The Chitin-binding type-2 domain maps to 44–90 (KFECPSRFGYFADPKDPHKFYICSNWEAVHKDCPGNTRWNEDEETCT). 2 cysteine pairs are disulfide-bonded: Cys47/Cys66 and Cys76/Cys89. The important for IgE-binding stretch occupies residues 52-90 (GYFADPKDPHKFYICSNWEAVHKDCPGNTRWNEDEETCT).

As to quaternary structure, monomer. In terms of tissue distribution, expressed in epithelial cells of the midgut.

The protein localises to the secreted. It localises to the endoplasmic reticulum. It is found in the cytoplasmic vesicle. Its function is as follows. Does not bind chitin in vitro. The protein is Major mite allergen Der p 23 of Dermatophagoides pteronyssinus (European house dust mite).